The primary structure comprises 221 residues: Histone H1.3 (221 aa).

The segment covering 1–17 (MSETAPAAPAAPAPVEK) has biased composition (low complexity). Residues 1 to 42 (MSETAPAAPAAPAPVEKTPVKKKAKKTGAAAGKRKASGPPVS) are disordered. Ser2 is modified (N-acetylserine). Ser2 carries the phosphoserine modification. Lys17 is modified (N6-acetyllysine). The residue at position 18 (Thr18) is a Phosphothreonine. Residues 20–36 (VKKKAKKTGAAAGKRKA) show a composition bias toward basic residues. N6-(beta-hydroxybutyryl)lysine occurs at positions 33, 35, and 53. The region spanning 37 to 110 (SGPPVSELIT…GASGSFKLNK (74 aa)) is the H15 domain. Citrulline is present on Arg55. N6-(beta-hydroxybutyryl)lysine occurs at positions 65, 86, and 91. The tract at residues 92–221 (GTLVQTKGTG…KAKKAAPRKK (130 aa)) is disordered. Phosphoserine; by PKC is present on Ser105. An N6-(beta-hydroxybutyryl)lysine mark is found at Lys107 and Lys141. Basic residues-rich tracts occupy residues 120–141 (KAKK…KPKK), 150–161 (KTAKKTPKKAKK), 170–187 (KVSK…KKAA), and 194–221 (KAPK…PRKK).

It belongs to the histone H1/H5 family. H1 histones are progressively phosphorylated during the cell cycle, becoming maximally phosphorylated during late G2 phase and M phase, and being dephosphorylated sharply thereafter. In terms of processing, hydroxybutyrylation of histones is induced by starvation. Post-translationally, citrullination at Arg-55 (H1R54ci) by PADI4 takes place within the DNA-binding site of H1 and results in its displacement from chromatin and global chromatin decondensation, thereby promoting pluripotency and stem cell maintenance.

It localises to the nucleus. Its subcellular location is the chromosome. In terms of biological role, histone H1 protein binds to linker DNA between nucleosomes forming the macromolecular structure known as the chromatin fiber. Histones H1 are necessary for the condensation of nucleosome chains into higher-order structured fibers. Also acts as a regulator of individual gene transcription through chromatin remodeling, nucleosome spacing and DNA methylation. In Mus musculus (Mouse), this protein is Histone H1.3.